The chain runs to 318 residues: Glutathione synthetase (318 aa).

The ATP-grasp domain occupies 125–311 (EKLFTAWFPE…ITGKLMDAIE (187 aa)). 151 to 208 (FRQEHGDIILKPLDGMGGASIFRVKENDPNVSVIIETLTNHGQNYAMAQTFVPDISNG) lines the ATP pocket. Residues glutamate 282 and asparagine 284 each coordinate Mg(2+).

The protein belongs to the prokaryotic GSH synthase family. Requires Mg(2+) as cofactor. Mn(2+) is required as a cofactor.

The catalysed reaction is gamma-L-glutamyl-L-cysteine + glycine + ATP = glutathione + ADP + phosphate + H(+). It functions in the pathway sulfur metabolism; glutathione biosynthesis; glutathione from L-cysteine and L-glutamate: step 2/2. This Vibrio vulnificus (strain YJ016) protein is Glutathione synthetase.